The primary structure comprises 168 residues: Transcription antitermination protein NusB (168 aa).

The protein belongs to the NusB family.

In terms of biological role, involved in transcription antitermination. Required for transcription of ribosomal RNA (rRNA) genes. Binds specifically to the boxA antiterminator sequence of the ribosomal RNA (rrn) operons. The protein is Transcription antitermination protein NusB of Prosthecochloris aestuarii (strain DSM 271 / SK 413).